We begin with the raw amino-acid sequence, 331 residues long: Cytosolic 5'-nucleotidase 3A (331 aa).

D83 (nucleophile) is an active-site residue. Residues D83 and D85 each contribute to the Mg(2+) site. D85 acts as the Proton donor in catalysis. E130 lines the CMP pocket. The N(7)-methyl-GMP site is built by E130 and S151. Substrate-binding positions include 198–199 and K247; that span reads SA. D272 lines the Mg(2+) pocket.

Belongs to the pyrimidine 5'-nucleotidase family.

The protein resides in the cytoplasm. It carries out the reaction N(7)-methyl-GMP + H2O = N(7)-methylguanosine + phosphate. The enzyme catalyses a ribonucleoside 5'-phosphate + H2O = a ribonucleoside + phosphate. Functionally, nucleotidase which shows specific activity towards cytidine monophosphate (CMP) and 7-methylguanosine monophosphate (m(7)GMP). CMP seems to be the preferred substrate. The chain is Cytosolic 5'-nucleotidase 3A (NT5C3A) from Gallus gallus (Chicken).